We begin with the raw amino-acid sequence, 183 residues long: NADH-quinone oxidoreductase subunit B (183 aa).

4 residues coordinate [4Fe-4S] cluster: cysteine 60, cysteine 61, cysteine 125, and cysteine 154.

Belongs to the complex I 20 kDa subunit family. In terms of assembly, NDH-1 is composed of 14 different subunits. Subunits NuoB, C, D, E, F, and G constitute the peripheral sector of the complex. [4Fe-4S] cluster serves as cofactor.

Its subcellular location is the cell inner membrane. It catalyses the reaction a quinone + NADH + 5 H(+)(in) = a quinol + NAD(+) + 4 H(+)(out). Functionally, NDH-1 shuttles electrons from NADH, via FMN and iron-sulfur (Fe-S) centers, to quinones in the respiratory chain. The immediate electron acceptor for the enzyme in this species is believed to be ubiquinone. Couples the redox reaction to proton translocation (for every two electrons transferred, four hydrogen ions are translocated across the cytoplasmic membrane), and thus conserves the redox energy in a proton gradient. In Desulfovibrio desulfuricans (strain ATCC 27774 / DSM 6949 / MB), this protein is NADH-quinone oxidoreductase subunit B.